A 142-amino-acid chain; its full sequence is Large ribosomal subunit protein uL13 (142 aa).

Belongs to the universal ribosomal protein uL13 family. As to quaternary structure, part of the 50S ribosomal subunit.

In terms of biological role, this protein is one of the early assembly proteins of the 50S ribosomal subunit, although it is not seen to bind rRNA by itself. It is important during the early stages of 50S assembly. The protein is Large ribosomal subunit protein uL13 of Marinomonas sp. (strain MWYL1).